A 122-amino-acid polypeptide reads, in one-letter code: Large ribosomal subunit protein uL14c (122 aa).

This sequence belongs to the universal ribosomal protein uL14 family. In terms of assembly, part of the 50S ribosomal subunit.

The protein localises to the plastid. Its subcellular location is the chloroplast. Functionally, binds to 23S rRNA. The chain is Large ribosomal subunit protein uL14c from Physcomitrium patens (Spreading-leaved earth moss).